Reading from the N-terminus, the 328-residue chain is Nucleotide-binding protein BL0705 (328 aa).

The tract at residues 1 to 35 (MNQQTTNRDTGEAAATNAPANSATSTSTPDNQPTP) is disordered. Low complexity predominate over residues 13 to 29 (AAATNAPANSATSTSTP). 46-53 (GMSGAGRS) contacts ATP. Residue 101–104 (DVRS) participates in GTP binding.

It belongs to the RapZ-like family.

In terms of biological role, displays ATPase and GTPase activities. The chain is Nucleotide-binding protein BL0705 from Bifidobacterium longum (strain NCC 2705).